Here is a 255-residue protein sequence, read N- to C-terminus: MEDKQAKPLRILLSNDDGVFAEGIRTLASELRTLAEVIIVAPDRNRSGASNSLTLEQPLRVTCVEENVYSVQGTPTDCVHFALNELLKNDLPDLVLSGINHGANLGDDVLYSGTVAAAMEGHFLGVQSIAFSLVGKTHFKTAATIAKRIVEQHLAKPIPTNRLLNINIPDLPLEQLEEIRVTRLGARHHAENMIKQLDPRGHEIYWLGPPGKEQDAGEGTDFHTIEQGYVSITPLQVDLTAHESLRAMDTWLKEK.

A divalent metal cation-binding residues include Asp-16, Asp-17, Ser-47, and Asn-100.

It belongs to the SurE nucleotidase family. A divalent metal cation serves as cofactor.

The protein localises to the cytoplasm. The enzyme catalyses a ribonucleoside 5'-phosphate + H2O = a ribonucleoside + phosphate. Functionally, nucleotidase that shows phosphatase activity on nucleoside 5'-monophosphates. This is 5'-nucleotidase SurE from Vibrio vulnificus (strain YJ016).